Consider the following 385-residue polypeptide: Putative RNA methyltransferase YpsC (385 aa).

A THUMP domain is found at 44–156; sequence AICRANLWLR…KDQALITLDS (113 aa).

Belongs to the methyltransferase superfamily. In terms of assembly, interacts with the RNA polymerase core.

This Bacillus subtilis (strain 168) protein is Putative RNA methyltransferase YpsC (ypsC).